The following is a 1479-amino-acid chain: Protein CHROMATIN REMODELING 20 (1479 aa).

Residues E19–R49 are a coiled coil. A compositionally biased stretch (basic and acidic residues) spans E40–Q55. The tract at residues E40–S109 is disordered. Low complexity predominate over residues D76–F86. Residues I94–S109 are compositionally biased toward basic and acidic residues. Residues S109–L199 are a coiled coil. The region spanning R472–S601 is the ADD domain. The GATA-type; atypical zinc-finger motif lies at R483–D514. Residues E524–P577 form a PHD-type; atypical zinc finger. A coiled-coil region spans residues L578 to S598. The segment at S594–D615 is disordered. Low complexity predominate over residues S598–D615. Residues V741–G924 form the Helicase ATP-binding domain. H754–T761 lines the ATP pocket. The DEAH box signature appears at D875–H878. Residues D1122–E1290 enclose the Helicase C-terminal domain. A disordered region spans residues S1400 to F1423.

The protein belongs to the SNF2/RAD54 helicase family.

Its subcellular location is the nucleus. It localises to the chromosome. The protein resides in the telomere. Its function is as follows. Involved in transcriptional regulation and chromatin remodeling. Facilitates DNA replication in multiple cellular environments and is required for efficient replication of a subset of genomic loci. Binds to DNA tandem repeat sequences in both telomeres and euchromatin and in vitro binds DNA quadruplex structures. May help stabilizing G-rich regions into regular chromatin structures by remodeling G4 DNA and incorporating H3.3-containing nucleosomes. Involved in DNA repair of gamma-irradiation-mediated damages. This is Protein CHROMATIN REMODELING 20 from Arabidopsis thaliana (Mouse-ear cress).